Reading from the N-terminus, the 440-residue chain is UDP-N-acetylmuramoylalanine--D-glutamate ligase (440 aa).

113-119 (GTNGKST) provides a ligand contact to ATP.

Belongs to the MurCDEF family.

The protein localises to the cytoplasm. The enzyme catalyses UDP-N-acetyl-alpha-D-muramoyl-L-alanine + D-glutamate + ATP = UDP-N-acetyl-alpha-D-muramoyl-L-alanyl-D-glutamate + ADP + phosphate + H(+). The protein operates within cell wall biogenesis; peptidoglycan biosynthesis. In terms of biological role, cell wall formation. Catalyzes the addition of glutamate to the nucleotide precursor UDP-N-acetylmuramoyl-L-alanine (UMA). The protein is UDP-N-acetylmuramoylalanine--D-glutamate ligase (murD) of Buchnera aphidicola subsp. Schizaphis graminum (strain Sg).